The chain runs to 115 residues: Ribonuclease P protein component (115 aa).

The protein belongs to the RnpA family. Consists of a catalytic RNA component (M1 or rnpB) and a protein subunit.

It catalyses the reaction Endonucleolytic cleavage of RNA, removing 5'-extranucleotides from tRNA precursor.. RNaseP catalyzes the removal of the 5'-leader sequence from pre-tRNA to produce the mature 5'-terminus. It can also cleave other RNA substrates such as 4.5S RNA. The protein component plays an auxiliary but essential role in vivo by binding to the 5'-leader sequence and broadening the substrate specificity of the ribozyme. The chain is Ribonuclease P protein component from Blochmanniella pennsylvanica (strain BPEN).